The sequence spans 359 residues: DNA replication and repair protein RecF (359 aa).

30 to 37 contacts ATP; it reads GQNAQGKT.

This sequence belongs to the RecF family.

Its subcellular location is the cytoplasm. Functionally, the RecF protein is involved in DNA metabolism; it is required for DNA replication and normal SOS inducibility. RecF binds preferentially to single-stranded, linear DNA. It also seems to bind ATP. The polypeptide is DNA replication and repair protein RecF (Lactococcus lactis subsp. cremoris (strain MG1363)).